Here is a 375-residue protein sequence, read N- to C-terminus: MTVIAAEAIGVAHERAEDYAGLSIEELDQRIATAKAKLGERLVILGHHYQRDDVVKHADLSGDSYGLSVDARKTAAEYIVFCGVHFMAESADILGRDDQTVILPDHTAGCSMADMADIEQLEEVWDELDEILGDAEAQVMPITYVNSSAAVKAFVGEHGGACCTSSNAEPIVRWAKNLRPKMLFLPDQHLGRYTAFAKLGIPLDKMLVWNPNLRYGGHTPEAIREAEVLLWAGHCSVHAQFRPAYIKAWREKHPEINVIVHPECTLGVTNEADYVGSTAYIIKTINEAPAGSMWAVGTEINLVNRLQTNNPDKTIVSVSPFACLCSTMYRIDPEELCWVLENLVEGNVVNQIAVPTAIKQKARLALERMLEIAGN.

Histidine 47 and serine 64 together coordinate iminosuccinate. [4Fe-4S] cluster is bound at residue cysteine 110. Iminosuccinate-binding positions include 144-146 (YVN) and serine 165. Cysteine 235 contributes to the [4Fe-4S] cluster binding site. Residues 261–263 (HPE) and threonine 278 each bind iminosuccinate. Cysteine 325 is a binding site for [4Fe-4S] cluster.

The protein belongs to the quinolinate synthase family. Type 3 subfamily. It depends on [4Fe-4S] cluster as a cofactor.

Its subcellular location is the cytoplasm. It catalyses the reaction iminosuccinate + dihydroxyacetone phosphate = quinolinate + phosphate + 2 H2O + H(+). Its pathway is cofactor biosynthesis; NAD(+) biosynthesis; quinolinate from iminoaspartate: step 1/1. Functionally, catalyzes the condensation of iminoaspartate with dihydroxyacetone phosphate to form quinolinate. This Herpetosiphon aurantiacus (strain ATCC 23779 / DSM 785 / 114-95) protein is Quinolinate synthase.